An 876-amino-acid polypeptide reads, in one-letter code: DNA gyrase subunit A (876 aa).

Residues 34–532 (LPDVRDGLKP…NSVDINIEDL (499 aa)) enclose the Topo IIA-type catalytic domain. Catalysis depends on Y122, which acts as the O-(5'-phospho-DNA)-tyrosine intermediate. Residues 559–565 (QRRGGKG) carry the GyrA-box motif. A disordered region spans residues 844–876 (DEELDAIDGSAAEGDEDIAPEADTDDDIAEDEE). Over residues 856 to 876 (EGDEDIAPEADTDDDIAEDEE) the composition is skewed to acidic residues.

This sequence belongs to the type II topoisomerase GyrA/ParC subunit family. In terms of assembly, heterotetramer, composed of two GyrA and two GyrB chains. In the heterotetramer, GyrA contains the active site tyrosine that forms a transient covalent intermediate with DNA, while GyrB binds cofactors and catalyzes ATP hydrolysis.

The protein localises to the cytoplasm. It catalyses the reaction ATP-dependent breakage, passage and rejoining of double-stranded DNA.. Its function is as follows. A type II topoisomerase that negatively supercoils closed circular double-stranded (ds) DNA in an ATP-dependent manner to modulate DNA topology and maintain chromosomes in an underwound state. Negative supercoiling favors strand separation, and DNA replication, transcription, recombination and repair, all of which involve strand separation. Also able to catalyze the interconversion of other topological isomers of dsDNA rings, including catenanes and knotted rings. Type II topoisomerases break and join 2 DNA strands simultaneously in an ATP-dependent manner. This is DNA gyrase subunit A from Klebsiella oxytoca.